Consider the following 383-residue polypeptide: MAGIPGLLILLLVLLCVFMQVSPYNVPWKPTWPAYRLPIVLPQSTLKLAKPDFDAKAKLEVSSSCGPQCHKGTPLPTYEEAKQYLSYETLYANGSRTETQVGIYILSNGEGRARSRDSEAAGKSRRKRQIYGYDGRFSIFGKDFLLNYPFSTSVKLSTGCTGTLVAEKHVLTAAHCIHDGKTYVKGTQKLRVGFLKPKYKDGAGGDNSSSSALVEKMKFQWIRVKRTHVPKGWIKGNANDIGMDYDYALLELKKPHKRKFMKIGVSPPAKQLPGGRIHFSGYDNDRPGNLVYRFCDVKDETYDLLYQQCDAQPGASGSGVYVRMWKRPQQKWERKIIGIFSGHQWVDMNGSPQDFNVAVRITPLKYAQICYWIKGNYLDCREG.

Residues 1 to 23 (MAGIPGLLILLLVLLCVFMQVSP) form the signal peptide. Residue Asn93 is glycosylated (N-linked (GlcNAc...) asparagine). Cys160 and Cys176 are joined by a disulfide. His175 acts as the Charge relay system in catalysis. The N-linked (GlcNAc...) asparagine glycan is linked to Asn207. Active-site charge relay system residues include Asp240 and Ser316.

This sequence belongs to the peptidase S1 family.

The protein localises to the secreted. The chain is Serine protease 23 (Prss23) from Rattus norvegicus (Rat).